Reading from the N-terminus, the 71-residue chain is ATP synthase F(0) complex subunit e, mitochondrial (71 aa).

N6-acetyllysine is present on lysine 34. Serine 68 is modified (phosphoserine).

Belongs to the ATPase e subunit family. In terms of assembly, component of the ATP synthase complex composed at least of ATP5F1A/subunit alpha, ATP5F1B/subunit beta, ATP5MC1/subunit c (homooctomer), MT-ATP6/subunit a, MT-ATP8/subunit 8, ATP5ME/subunit e, ATP5MF/subunit f, ATP5MG/subunit g, ATP5MK/subunit k, ATP5MJ/subunit j, ATP5F1C/subunit gamma, ATP5F1D/subunit delta, ATP5F1E/subunit epsilon, ATP5PF/subunit F6, ATP5PB/subunit b, ATP5PD/subunit d, ATP5PO/subunit OSCP. ATP synthase complex consists of a soluble F(1) head domain (subunits alpha(3) and beta(3)) - the catalytic core - and a membrane F(0) domain - the membrane proton channel (subunits c, a, 8, e, f, g, k and j). These two domains are linked by a central stalk (subunits gamma, delta, and epsilon) rotating inside the F1 region and a stationary peripheral stalk (subunits F6, b, d, and OSCP). In terms of tissue distribution, mammary gland, liver, kidney, heart, spleen, brain and lung.

It is found in the mitochondrion. The protein resides in the mitochondrion inner membrane. Functionally, subunit e, of the mitochondrial membrane ATP synthase complex (F(1)F(0) ATP synthase or Complex V) that produces ATP from ADP in the presence of a proton gradient across the membrane which is generated by electron transport complexes of the respiratory chain. ATP synthase complex consist of a soluble F(1) head domain - the catalytic core - and a membrane F(1) domain - the membrane proton channel. These two domains are linked by a central stalk rotating inside the F(1) region and a stationary peripheral stalk. During catalysis, ATP synthesis in the catalytic domain of F(1) is coupled via a rotary mechanism of the central stalk subunits to proton translocation. In vivo, can only synthesize ATP although its ATP hydrolase activity can be activated artificially in vitro. Part of the complex F(0) domain. In Mus musculus (Mouse), this protein is ATP synthase F(0) complex subunit e, mitochondrial.